The following is a 401-amino-acid chain: Exodeoxyribonuclease 7 large subunit (401 aa).

The protein belongs to the XseA family. Heterooligomer composed of large and small subunits.

The protein resides in the cytoplasm. It catalyses the reaction Exonucleolytic cleavage in either 5'- to 3'- or 3'- to 5'-direction to yield nucleoside 5'-phosphates.. In terms of biological role, bidirectionally degrades single-stranded DNA into large acid-insoluble oligonucleotides, which are then degraded further into small acid-soluble oligonucleotides. In Thermoanaerobacter pseudethanolicus (strain ATCC 33223 / 39E) (Clostridium thermohydrosulfuricum), this protein is Exodeoxyribonuclease 7 large subunit.